Here is a 468-residue protein sequence, read N- to C-terminus: Ribulose bisphosphate carboxylase large chain (468 aa).

At Lys-5 the chain carries N6,N6,N6-trimethyllysine. Asn-114 and Thr-164 together coordinate substrate. Lys-166 (proton acceptor) is an active-site residue. A substrate-binding site is contributed by Lys-168. Mg(2+)-binding residues include Lys-192, Asp-194, and Glu-195. An N6-carboxylysine modification is found at Lys-192. The active-site Proton acceptor is the His-285. Substrate contacts are provided by Arg-286, His-318, and Ser-370.

This sequence belongs to the RuBisCO large chain family. Type I subfamily. As to quaternary structure, heterohexadecamer of 8 large chains and 8 small chains; disulfide-linked. The disulfide link is formed within the large subunit homodimers. The cofactor is Mg(2+). The disulfide bond which can form in the large chain dimeric partners within the hexadecamer appears to be associated with oxidative stress and protein turnover.

The protein localises to the plastid. It localises to the chloroplast. The catalysed reaction is 2 (2R)-3-phosphoglycerate + 2 H(+) = D-ribulose 1,5-bisphosphate + CO2 + H2O. It carries out the reaction D-ribulose 1,5-bisphosphate + O2 = 2-phosphoglycolate + (2R)-3-phosphoglycerate + 2 H(+). RuBisCO catalyzes two reactions: the carboxylation of D-ribulose 1,5-bisphosphate, the primary event in carbon dioxide fixation, as well as the oxidative fragmentation of the pentose substrate in the photorespiration process. Both reactions occur simultaneously and in competition at the same active site. This Salvia divinorum (Maria pastora) protein is Ribulose bisphosphate carboxylase large chain.